Reading from the N-terminus, the 28-residue chain is EVVRSNNFDPSKLSGKWYSILLASDRKE.

It belongs to the calycin superfamily. Lipocalin family. As to expression, nasal mucosa.

It is found in the secreted. The protein localises to the extracellular space. In terms of biological role, this soluble protein may play a specific role in odor discrimination and perception. This is Odorant-binding protein 1 from Hystrix cristata (North African crested porcupine).